Here is a 525-residue protein sequence, read N- to C-terminus: Cytochrome P450 750A1 (525 aa).

Residues 13-33 (PLPLPAILIATFIFFFSCWIL) form a helical membrane-spanning segment. Cys-465 contacts heme.

This sequence belongs to the cytochrome P450 family. Heme serves as cofactor.

The protein resides in the membrane. The sequence is that of Cytochrome P450 750A1 (CYP750A1) from Pinus taeda (Loblolly pine).